A 178-amino-acid chain; its full sequence is Probable inosine/xanthosine triphosphatase (178 aa).

The protein belongs to the YjjX NTPase family. As to quaternary structure, homodimer. Mg(2+) serves as cofactor. Requires Mn(2+) as cofactor.

It catalyses the reaction XTP + H2O = XDP + phosphate + H(+). The catalysed reaction is ITP + H2O = IDP + phosphate + H(+). Functionally, phosphatase that hydrolyzes non-canonical purine nucleotides such as XTP and ITP to their respective diphosphate derivatives. Probably excludes non-canonical purines from DNA/RNA precursor pool, thus preventing their incorporation into DNA/RNA and avoiding chromosomal lesions. The sequence is that of Probable inosine/xanthosine triphosphatase from Pyrobaculum calidifontis (strain DSM 21063 / JCM 11548 / VA1).